Here is a 118-residue protein sequence, read N- to C-terminus: Class I hydrophobin 1 (118 aa).

An N-terminal signal peptide occupies residues Met1–Ala20. Disulfide bonds link Cys34/Cys97, Cys41/Cys91, Cys42/Cys77, and Cys98/Cys111. The N-linked (GlcNAc...) asparagine glycan is linked to Asn54. N-linked (GlcNAc...) asparagine glycosylation occurs at Asn115.

It belongs to the fungal hydrophobin family. In terms of assembly, self-assembles to form functional amyloid fibrils called rodlets. Self-assembly into fibrillar rodlets occurs spontaneously at hydrophobic:hydrophilic interfaces and the rodlets further associate laterally to form amphipathic monolayers.

It is found in the secreted. The protein localises to the cell wall. Functionally, aerial growth, conidiation, and dispersal of filamentous fungi in the environment rely upon a capability of their secreting small amphipathic proteins called hydrophobins (HPBs) with low sequence identity. Class I can self-assemble into an outermost layer of rodlet bundles on aerial cell surfaces, conferring cellular hydrophobicity that supports fungal growth, development and dispersal; whereas Class II form highly ordered films at water-air interfaces through intermolecular interactions but contribute nothing to the rodlet structure. This is Class I hydrophobin 1 from Coprinopsis cinerea (strain Okayama-7 / 130 / ATCC MYA-4618 / FGSC 9003) (Inky cap fungus).